A 101-amino-acid chain; its full sequence is Small ribosomal subunit protein uS14 (101 aa).

Belongs to the universal ribosomal protein uS14 family. As to quaternary structure, part of the 30S ribosomal subunit. Contacts proteins S3 and S10.

Binds 16S rRNA, required for the assembly of 30S particles and may also be responsible for determining the conformation of the 16S rRNA at the A site. The protein is Small ribosomal subunit protein uS14 of Stenotrophomonas maltophilia (strain K279a).